The sequence spans 208 residues: Transcription factor atf-4 homolog (208 aa).

Disordered stretches follow at residues 18-47 (HNQTHSTPQYHNHHHHHHQSPTYPQSYFNP) and 106-165 (ERRS…EKEE). Residues 110-120 (NSSASPASNWS) show a composition bias toward low complexity. Basic and acidic residues predominate over residues 121–141 (SDEHDSQSEKSYHPYKTPEKK). Residues 138 to 201 (PEKKERKKAQ…RYFKKFMTEM (64 aa)) form the bZIP domain. The segment at 140-163 (KKERKKAQNRLAATRYREKKRREK) is basic motif. The tract at residues 173–187 (LSVTNGKLKDQVSEL) is leucine-zipper.

This sequence belongs to the bZIP family.

The protein localises to the nucleus. Its function is as follows. Transcription factor. Involved in positively modulating longevity and stress tolerance, probably acting by positively regulating expression of transsulfuration enzyme cth-2, leading to increased hydrogen sulfide production and therefore increased protein persulfidation, a protective modification of redox-reactive cysteines. May mediate longevity and increased stress resistance induced by mTORC1 suppression. This Caenorhabditis elegans protein is Transcription factor atf-4 homolog.